The sequence spans 255 residues: Acetylglutamate kinase (255 aa).

Residues 40–41, Arg-62, and Asn-153 each bind substrate; that span reads GG.

It belongs to the acetylglutamate kinase family. ArgB subfamily.

The protein localises to the cytoplasm. It carries out the reaction N-acetyl-L-glutamate + ATP = N-acetyl-L-glutamyl 5-phosphate + ADP. It functions in the pathway amino-acid biosynthesis; L-arginine biosynthesis; N(2)-acetyl-L-ornithine from L-glutamate: step 2/4. Functionally, catalyzes the ATP-dependent phosphorylation of N-acetyl-L-glutamate. The chain is Acetylglutamate kinase from Bacillus cereus (strain AH187).